A 763-amino-acid chain; its full sequence is High glucose sensor RGT2 (763 aa).

Positions 1 to 28 are disordered; that stretch reads MNDSQNCLRQREENSHLNPGNDFGHHQG. Residues 1–99 are Cytoplasmic-facing; it reads MNDSQNCLRQ…PLPLRSNVMS (99 aa). Residues 100 to 120 traverse the membrane as a helical segment; the sequence is VLVGIFVAVGGFLFGYDTGLI. The Extracellular portion of the chain corresponds to 121-144; that stretch reads NSITDMPYVKTYIAPNHSYFTTSQ. A glycan (N-linked (GlcNAc...) asparagine) is linked at asparagine 136. A helical membrane pass occupies residues 145–165; sequence IAILVSFLSLGTFFGALIAPY. The Cytoplasmic portion of the chain corresponds to 166–175; that stretch reads ISDSYGRKPT. The helical transmembrane segment at 176 to 196 threads the bilayer; the sequence is IMFSTAVIFSIGNSLQVASGG. Residue leucine 197 is a topological domain, extracellular. Residues 198–218 form a helical membrane-spanning segment; that stretch reads VLLIVGRVISGIGIGIISAVV. The Cytoplasmic portion of the chain corresponds to 219-231; sequence PLYQAEAAQKNLR. A helical transmembrane segment spans residues 232-252; that stretch reads GAIISSYQWAITIGLLVSSAV. Residues 253–266 lie on the Extracellular side of the membrane; that stretch reads SQGTHSKNGPSSYR. Residues 267 to 287 form a helical membrane-spanning segment; the sequence is IPIGLQYVWSSILAVGMIFLP. At 288–357 the chain is on the cytoplasmic side; the sequence is ESPRYYVLKD…SENRPKQILR (70 aa). A helical membrane pass occupies residues 358–378; that stretch reads IFTGIAIQAFQQASGINFIFY. At 379 to 393 the chain is on the extracellular side; it reads YGVNFFNNTGVDNSY. Asparagine 385 is a glycosylation site (N-linked (GlcNAc...) asparagine). A helical transmembrane segment spans residues 394 to 414; it reads LVSFISYAVNVAFSIPGMYLV. Topologically, residues 415–421 are cytoplasmic; that stretch reads DRIGRRP. The helical transmembrane segment at 422–442 threads the bilayer; it reads VLLAGGVIMAIANLVIAIVGV. The Extracellular segment spans residues 443-452; the sequence is SEGKTVVASK. Residues 453–473 traverse the membrane as a helical segment; sequence IMIAFICLFIAAFSATWGGVV. The Cytoplasmic portion of the chain corresponds to 474 to 491; the sequence is WVVSAELYPLGVRSKCTA. The helical transmembrane segment at 492–512 threads the bilayer; that stretch reads ICAAANWLVNFTCALITPYIV. Over 513-524 the chain is Extracellular; sequence DVGSHTSSMGPK. A helical transmembrane segment spans residues 525–545; it reads IFFIWGGLNVVAVIVVYFAVY. Topologically, residues 546–763 are cytoplasmic; that stretch reads ETRGLTLEEI…SKHSQYTSPQ (218 aa). A compositionally biased stretch (low complexity) spans 725-737; sequence SSTTSNDTSFSPS. The tract at residues 725–763 is disordered; it reads SSTTSNDTSFSPSHNSNARTSSNWTSDLASKHSQYTSPQ. Polar residues predominate over residues 738–763; that stretch reads HNSNARTSSNWTSDLASKHSQYTSPQ.

It belongs to the major facilitator superfamily. Sugar transporter (TC 2.A.1.1) family. Interacts with YCK1. Interacts with MTH1 and STD1. Phosphorylated in the C-terminal tail on Yck consensus sites in a yeast casein kinases YCK1 and YCK2 (Yck)-dependent manner. This phosphorylation is required for interaction with HXT corepressors MTH1 and STD1 and ultimately HXT expression.

The protein localises to the cell membrane. Functionally, low-affinity high glucose sensor that is part of the sensor/receptor-repressor (SSR) glucose-signaling pathway, which detects extracellular glucose and induces expression of glucose transporters that bring glucose into the cell. The transporter-like sensor generates an intracellular signal in the presence of high levels of glucose to promote high glucose-induced expression of HXT1. Binding of glucose to the RGT2 transmembrane domain activates a downstream signaling cascade, leading to phosphorylation of the RGT1 corepressors MTH1 and STD1, targeting them for SCF(Grr1)-dependent ubiquitination and degradation. Depletion of the corepressors robs RGT1 of its ability to repress expression of HXT genes, leading to accumulation of glucose transporters in the plasma membrane. Even though RGT2 is similar to glucose transporters, it appears to be unable to transport glucose. The chain is High glucose sensor RGT2 from Saccharomyces cerevisiae (strain ATCC 204508 / S288c) (Baker's yeast).